A 188-amino-acid chain; its full sequence is Elongation factor P (188 aa).

It belongs to the elongation factor P family.

The protein resides in the cytoplasm. The protein operates within protein biosynthesis; polypeptide chain elongation. In terms of biological role, involved in peptide bond synthesis. Stimulates efficient translation and peptide-bond synthesis on native or reconstituted 70S ribosomes in vitro. Probably functions indirectly by altering the affinity of the ribosome for aminoacyl-tRNA, thus increasing their reactivity as acceptors for peptidyl transferase. The protein is Elongation factor P of Pelodictyon phaeoclathratiforme (strain DSM 5477 / BU-1).